Reading from the N-terminus, the 125-residue chain is Holo-[acyl-carrier-protein] synthase (125 aa).

Residues Asp8 and Glu57 each contribute to the Mg(2+) site.

This sequence belongs to the P-Pant transferase superfamily. AcpS family. Mg(2+) is required as a cofactor.

The protein localises to the cytoplasm. It carries out the reaction apo-[ACP] + CoA = holo-[ACP] + adenosine 3',5'-bisphosphate + H(+). In terms of biological role, transfers the 4'-phosphopantetheine moiety from coenzyme A to a Ser of acyl-carrier-protein. In Geobacter sp. (strain M21), this protein is Holo-[acyl-carrier-protein] synthase.